The chain runs to 142 residues: Large ribosomal subunit protein uL13 (142 aa).

The protein belongs to the universal ribosomal protein uL13 family. In terms of assembly, part of the 50S ribosomal subunit.

This protein is one of the early assembly proteins of the 50S ribosomal subunit, although it is not seen to bind rRNA by itself. It is important during the early stages of 50S assembly. This is Large ribosomal subunit protein uL13 from Acholeplasma laidlawii (strain PG-8A).